We begin with the raw amino-acid sequence, 141 residues long: Hemoglobin subunit alpha (141 aa).

One can recognise a Globin domain in the interval 1-141 (VLSSADKNNI…VSTVLTSKYR (141 aa)). Ser3 bears the Phosphoserine mark. N6-succinyllysine occurs at positions 7 and 11. Lys16 carries the post-translational modification N6-acetyllysine; alternate. Lys16 is modified (N6-succinyllysine; alternate). Tyr24 carries the post-translational modification Phosphotyrosine. Ser35 is modified (phosphoserine). Residue Lys40 is modified to N6-succinyllysine. Ser49 carries the phosphoserine modification. Position 58 (His58) interacts with O2. His87 is a heme b binding site. The residue at position 102 (Ser102) is a Phosphoserine. A phosphothreonine mark is found at Thr108, Thr134, and Thr137. Phosphoserine is present on Ser138.

The protein belongs to the globin family. As to quaternary structure, heterotetramer of two alpha chains and two beta chains. Red blood cells.

Its function is as follows. Involved in oxygen transport from the lung to the various peripheral tissues. In terms of biological role, hemopressin acts as an antagonist peptide of the cannabinoid receptor CNR1. Hemopressin-binding efficiently blocks cannabinoid receptor CNR1 and subsequent signaling. This chain is Hemoglobin subunit alpha (HBA), found in Paguma larvata (Masked palm civet).